The following is an 87-amino-acid chain: UPF0335 protein RHECIAT_CH0003797 (87 aa).

The protein belongs to the UPF0335 family.

The polypeptide is UPF0335 protein RHECIAT_CH0003797 (Rhizobium etli (strain CIAT 652)).